The sequence spans 514 residues: Membrane-bound lytic murein transglycosylase F (514 aa).

Residues 1–30 form the signal peptide; that stretch reads MLSNNPLITKFRELFTVALVLALLSGCQWQ. The non-LT domain stretch occupies residues 31–271; it reads DDNLTDLEKI…QLEEKYFGHV (241 aa). The interval 272 to 514 is LT domain; that stretch reads GSFDYVDTRA…KTIEDPGPSQ (243 aa). E316 is a catalytic residue. Positions 482-514 are disordered; it reads PVPPRQANVDGSLNNEAAISSAEKTIEDPGPSQ. The segment covering 490-499 has biased composition (polar residues); the sequence is VDGSLNNEAA.

It in the N-terminal section; belongs to the bacterial solute-binding protein 3 family. The protein in the C-terminal section; belongs to the transglycosylase Slt family.

The protein resides in the cell outer membrane. The enzyme catalyses Exolytic cleavage of the (1-&gt;4)-beta-glycosidic linkage between N-acetylmuramic acid (MurNAc) and N-acetylglucosamine (GlcNAc) residues in peptidoglycan, from either the reducing or the non-reducing ends of the peptidoglycan chains, with concomitant formation of a 1,6-anhydrobond in the MurNAc residue.. Murein-degrading enzyme that degrades murein glycan strands and insoluble, high-molecular weight murein sacculi, with the concomitant formation of a 1,6-anhydromuramoyl product. Lytic transglycosylases (LTs) play an integral role in the metabolism of the peptidoglycan (PG) sacculus. Their lytic action creates space within the PG sacculus to allow for its expansion as well as for the insertion of various structures such as secretion systems and flagella. The sequence is that of Membrane-bound lytic murein transglycosylase F from Photobacterium profundum (strain SS9).